The primary structure comprises 459 residues: Cysteine--tRNA ligase (459 aa).

A Zn(2+)-binding site is contributed by C28. Residues 30–40 carry the 'HIGH' region motif; the sequence is ITIYDLCHIGH. Zn(2+)-binding residues include C209, H234, and E238. A 'KMSKS' region motif is present at residues 266 to 270; that stretch reads KMSKS. An ATP-binding site is contributed by K269.

This sequence belongs to the class-I aminoacyl-tRNA synthetase family. In terms of assembly, monomer. The cofactor is Zn(2+).

It localises to the cytoplasm. The enzyme catalyses tRNA(Cys) + L-cysteine + ATP = L-cysteinyl-tRNA(Cys) + AMP + diphosphate. This chain is Cysteine--tRNA ligase, found in Shewanella denitrificans (strain OS217 / ATCC BAA-1090 / DSM 15013).